The following is a 362-amino-acid chain: Adenosine deaminase (362 aa).

Zn(2+) is bound by residues His19 and His21. Positions 21, 23, and 181 each coordinate substrate. His208 serves as a coordination point for Zn(2+). The active-site Proton donor is the Glu211. Zn(2+) is bound at residue Asp300.

Belongs to the metallo-dependent hydrolases superfamily. Adenosine and AMP deaminases family. Adenosine deaminase subfamily. It depends on Zn(2+) as a cofactor.

It catalyses the reaction adenosine + H2O + H(+) = inosine + NH4(+). The enzyme catalyses 2'-deoxyadenosine + H2O + H(+) = 2'-deoxyinosine + NH4(+). In terms of biological role, catalyzes the hydrolytic deamination of adenosine and 2-deoxyadenosine. The sequence is that of Adenosine deaminase from Mycolicibacterium vanbaalenii (strain DSM 7251 / JCM 13017 / BCRC 16820 / KCTC 9966 / NRRL B-24157 / PYR-1) (Mycobacterium vanbaalenii).